A 164-amino-acid chain; its full sequence is Peptidyl-prolyl cis-trans isomerase A (164 aa).

An N-acetylmethionine modification is found at methionine 1. Residue valine 2 is modified to N-acetylvaline; in Peptidyl-prolyl cis-trans isomerase A, N-terminally processed. A PPIase cyclophilin-type domain is found at 7–163 (FFDISADGEP…KKITISDCGQ (157 aa)). The residue at position 28 (lysine 28) is an N6-acetyllysine; alternate. Lysine 28 is covalently cross-linked (Glycyl lysine isopeptide (Lys-Gly) (interchain with G-Cter in SUMO2); alternate). Lysine 28 participates in a covalent cross-link: Glycyl lysine isopeptide (Lys-Gly) (interchain with G-Cter in ubiquitin); alternate. Position 44 is an N6-acetyllysine (lysine 44). Serine 77 is subject to Phosphoserine. Position 82 is an N6-acetyllysine; alternate (lysine 82). Lysine 82 is covalently cross-linked (Glycyl lysine isopeptide (Lys-Gly) (interchain with G-Cter in SUMO2); alternate). Phosphothreonine is present on threonine 93. An N-linked (GlcNAc...) asparagine glycan is attached at asparagine 108. N6-acetyllysine is present on residues lysine 125, lysine 131, and lysine 133.

This sequence belongs to the cyclophilin-type PPIase family. PPIase A subfamily. As to quaternary structure, interacts with protein phosphatase PPP3CA/calcineurin A. Interacts with PRPF19 isoform 2 (via N-terminus). Interacts with isoform 2 of BSG/CD147. Interacts with FOXO1; the interaction promotes FOXO1 dephosphorylation, nuclear accumulation and transcriptional activity. Interacts with integrin ITGA2B:ITGB3; the interaction is ROS and peptidyl-prolyl cis-trans isomerase (PPIase) activity-dependent and is increased in the presence of thrombin. Interacts with MAP3K5. Interacts with TARDBP; the interaction is dependent on the RNA-binding activity of TARDBP and the PPIase activity of PPIA/CYPA and the acetylation of PPIA/CYPA at Lys-125 favors the interaction. Interacts with HNRNPA1, HNRNPA2B1, HNRNPC, RBMX, HNRNPK and HNRNPM. Acetylation at Lys-125 markedly inhibits catalysis of cis to trans isomerization. PPIA acetylation also antagonizes the immunosuppressive effects of cyclosporine by inhibiting the sequential steps of cyclosporine binding and calcineurin inhibition. Acetylation at Lys-125 favors the interaction with TARDBP.

The protein localises to the cytoplasm. The protein resides in the secreted. It is found in the nucleus. The catalysed reaction is [protein]-peptidylproline (omega=180) = [protein]-peptidylproline (omega=0). With respect to regulation, binds cyclosporin A (CsA). CsA mediates some of its effects via an inhibitory action on PPIase. Functionally, catalyzes the cis-trans isomerization of proline imidic peptide bonds in oligopeptides. Exerts a strong chemotactic effect on leukocytes partly through activation of one of its membrane receptors BSG/CD147, initiating a signaling cascade that culminates in MAPK/ERK activation. Activates endothelial cells (ECs) in a proinflammatory manner by stimulating activation of NF-kappa-B and ERK, JNK and p38 MAP-kinases and by inducing expression of adhesion molecules including SELE and VCAM1. Induces apoptosis in ECs by promoting the FOXO1-dependent expression of CCL2 and BCL2L11 which are involved in EC chemotaxis and apoptosis. In response to oxidative stress, initiates proapoptotic and antiapoptotic signaling in ECs via activation of NF-kappa-B and AKT1 and up-regulation of antiapoptotic protein BCL2. Negatively regulates MAP3K5/ASK1 kinase activity, autophosphorylation and oxidative stress-induced apoptosis mediated by MAP3K5/ASK1. Necessary for the assembly of TARDBP in heterogeneous nuclear ribonucleoprotein (hnRNP) complexes and regulates TARDBP binding to RNA UG repeats and TARDBP-dependent expression of HDAC6, ATG7 and VCP which are involved in clearance of protein aggregates. Plays an important role in platelet activation and aggregation. Regulates calcium mobilization and integrin ITGA2B:ITGB3 bidirectional signaling via increased ROS production as well as by facilitating the interaction between integrin and the cell cytoskeleton. Binds heparan sulfate glycosaminoglycans. The chain is Peptidyl-prolyl cis-trans isomerase A (PPIA) from Cricetulus griseus (Chinese hamster).